The primary structure comprises 481 residues: Exodeoxyribonuclease I (481 aa).

Residues 12–193 (LFYDYETFGK…SSDVYATMNI (182 aa)) form the Exonuclease domain. The Mg(2+) site is built by Asp-15, Glu-17, and Asp-186. Residue Glu-17 coordinates substrate. Residues 202 to 350 (PKLFNFFFKY…KLKKFLCSIA (149 aa)) form the ExoI SH3-like domain. Residues 356–471 (NGSNVDLKMY…ELFEYVKYTR (116 aa)) form the ExoI C-terminal domain.

In terms of assembly, monomer. Interacts with ssb (via C-terminus); this interaction stimulates the exonuclease activity by recruiting the enzyme to its substrate. Mg(2+) is required as a cofactor.

It carries out the reaction Exonucleolytic cleavage in the 3'- to 5'-direction to yield nucleoside 5'-phosphates.. Functionally, degrades single-stranded DNA (ssDNA) in a highly processive manner. Also functions as a DNA deoxyribophosphodiesterase that releases deoxyribose-phosphate moieties following the cleavage of DNA at an apurinic/apyrimidinic (AP) site by either an AP endonuclease or AP lyase. The sequence is that of Exodeoxyribonuclease I (sbcB) from Buchnera aphidicola subsp. Baizongia pistaciae (strain Bp).